An 81-amino-acid polypeptide reads, in one-letter code: Cell division protein ZapB (81 aa).

A coiled-coil region spans residues 6–80 (EVFEKLEAKV…LQALLGRMEE (75 aa)). The segment covering 38 to 47 (SLAQDVQSAQ) has biased composition (polar residues). The interval 38–67 (SLAQDVQSAQHQREELERENNHLKEQQSGW) is disordered. Over residues 48–62 (HQREELERENNHLKE) the composition is skewed to basic and acidic residues.

Belongs to the ZapB family. As to quaternary structure, homodimer. The ends of the coiled-coil dimer bind to each other, forming polymers. Interacts with FtsZ.

The protein localises to the cytoplasm. Its function is as follows. Non-essential, abundant cell division factor that is required for proper Z-ring formation. It is recruited early to the divisome by direct interaction with FtsZ, stimulating Z-ring assembly and thereby promoting cell division earlier in the cell cycle. Its recruitment to the Z-ring requires functional FtsA or ZipA. The sequence is that of Cell division protein ZapB from Citrobacter koseri (strain ATCC BAA-895 / CDC 4225-83 / SGSC4696).